The following is a 366-amino-acid chain: Terpene synthase 4 (366 aa).

The DDxx(x)D/E motif motif lies at 91 to 96 (DDFLER). An NDxxSxxxD/E motif motif is present at residues 241 to 249 (NDCVSYAKE).

This sequence belongs to the terpene synthase family.

It catalyses the reaction (2E,6E)-farnesyl diphosphate = (1S,2S,4R)-beta-elemene + diphosphate. In terms of biological role, terpene synthase that converts its substrate farnesyl diphosphate (FPP) into the sesquiterpenes bicycloelemene, beta-elemene and 2 yet unidentified sesquiterpenes. The protein is Terpene synthase 4 of Dictyostelium purpureum (Slime mold).